Reading from the N-terminus, the 276-residue chain is 2-dehydro-3-deoxyphosphooctonate aldolase (276 aa).

It belongs to the KdsA family.

The protein localises to the cytoplasm. It catalyses the reaction D-arabinose 5-phosphate + phosphoenolpyruvate + H2O = 3-deoxy-alpha-D-manno-2-octulosonate-8-phosphate + phosphate. It participates in carbohydrate biosynthesis; 3-deoxy-D-manno-octulosonate biosynthesis; 3-deoxy-D-manno-octulosonate from D-ribulose 5-phosphate: step 2/3. The protein operates within bacterial outer membrane biogenesis; lipopolysaccharide biosynthesis. The protein is 2-dehydro-3-deoxyphosphooctonate aldolase of Xylella fastidiosa (strain 9a5c).